We begin with the raw amino-acid sequence, 382 residues long: Pyrimidine monooxygenase RutA (382 aa).

FMN-binding positions include 68 to 69, N134, E143, 159 to 160, and S209; these read IK and RY.

It belongs to the NtaA/SnaA/DszA monooxygenase family. RutA subfamily.

The catalysed reaction is uracil + FMNH2 + NADH + O2 = (Z)-3-ureidoacrylate + FMN + NAD(+) + H2O + H(+). It catalyses the reaction thymine + FMNH2 + NADH + O2 = (Z)-2-methylureidoacrylate + FMN + NAD(+) + H2O + H(+). Functionally, catalyzes the pyrimidine ring opening between N-3 and C-4 by an unusual flavin hydroperoxide-catalyzed mechanism, adding oxygen atoms in the process to yield ureidoacrylate peracid, that immediately reacts with FMN forming ureidoacrylate and FMN-N(5)-oxide. The FMN-N(5)-oxide reacts spontaneously with NADH to produce FMN. Requires the flavin reductase RutF to regenerate FMN in vivo. In Escherichia coli O150:H5 (strain SE15), this protein is Pyrimidine monooxygenase RutA.